The sequence spans 91 residues: Probable Fe(2+)-trafficking protein (91 aa).

This sequence belongs to the Fe(2+)-trafficking protein family. Monomer.

Could be a mediator in iron transactions between iron acquisition and iron-requiring processes, such as synthesis and/or repair of Fe-S clusters in biosynthetic enzymes. The protein is Probable Fe(2+)-trafficking protein of Salmonella agona (strain SL483).